A 282-amino-acid polypeptide reads, in one-letter code: Endonuclease V (282 aa).

Mg(2+) contacts are provided by aspartate 52 and aspartate 126. Positions serine 250–cysteine 282 are disordered.

The protein belongs to the endonuclease V family. Monomer. Interacts with PABPC1; the interaction is RNA-dependent and stimulates ENDOV activity. Mg(2+) is required as a cofactor.

It localises to the cytoplasm. Its subcellular location is the nucleus. It is found in the nucleolus. The protein localises to the stress granule. Inhibited by normal intracellular concentrations of ATP. In terms of biological role, endoribonuclease that specifically cleaves inosine-containing RNAs: cleaves RNA at the second phosphodiester bond 3' to inosine. Active against both single-stranded and double-stranded RNAs. Has strong preference for single-stranded RNAs (ssRNAs) toward double-stranded RNAs (dsRNAs). Cleaves mRNAs and tRNAs containing inosine. Also able to cleave structure-specific dsRNA substrates containing the specific sites 5'-IIUI-3' and 5'-UIUU-3'. Inosine is present in a number of RNAs following editing; the function of inosine-specific endoribonuclease is still unclear: it could either play a regulatory role in edited RNAs, or be involved in antiviral response by removing the hyperedited long viral dsRNA genome that has undergone A-to-I editing. Binds branched DNA structures. Functionally, endoribonuclease that specifically cleaves inosine-containing RNAs: cleaves RNA at the second phosphodiester bond 3' to inosine. Active against both single-stranded and double-stranded RNAs. Cleaves tRNAs containing inosine. The protein is Endonuclease V (ENDOV) of Homo sapiens (Human).